Here is a 100-residue protein sequence, read N- to C-terminus: uncharacterized protein (100 aa).

This is an uncharacterized protein from Acidianus filamentous virus 2 (isolate Italy/Pozzuoli) (AFV-2).